The following is a 397-amino-acid chain: MIFKAAGSGAEDRPWRPWDADGLPLRDSLRGLSPYGAPQLDVPVRLNTNENPHPPSVGLVDAIGKAAALAATEANRYPDRDAEALRADLAYYLTPDAGFGVHTSQVWAANGSNEILQQLLQAFGGPGRVALGFEPSYSMHRLIALATATEWVAGQRAEDFTLSPAVVTDAIARHRPALVFLCSPNNPTGTALPPEVVAAACEAVEATGSGMVVVDEAYAEFRRAGVPSTLTLLPRHPRLVVTRTMSKAFALAGARVGYLAAHPAVVDSLYLVRLPYHLSSFTQAVARTALAHADELLGTVEAVKAQRDRIVRELPALGLRLAPSDANFVFFGRFADQRAVWQSLLDAGVLVRDVGLTGWLRVTAGLPNEVDAFLGALGRTLTGSVIGADGVISLATA.

Position 247 is an N6-(pyridoxal phosphate)lysine (Lys247).

The protein belongs to the class-II pyridoxal-phosphate-dependent aminotransferase family. Histidinol-phosphate aminotransferase subfamily. Homodimer. It depends on pyridoxal 5'-phosphate as a cofactor.

It carries out the reaction L-histidinol phosphate + 2-oxoglutarate = 3-(imidazol-4-yl)-2-oxopropyl phosphate + L-glutamate. It participates in amino-acid biosynthesis; L-histidine biosynthesis; L-histidine from 5-phospho-alpha-D-ribose 1-diphosphate: step 7/9. The chain is Histidinol-phosphate aminotransferase from Frankia casuarinae (strain DSM 45818 / CECT 9043 / HFP020203 / CcI3).